The chain runs to 153 residues: Cytochrome c-type biogenesis protein CcmE (153 aa).

The Cytoplasmic segment spans residues 1–6 (MNARRR). Residues 7-27 (LWSLLMLILAVGTAATLTIMA) traverse the membrane as a helical; Signal-anchor for type II membrane protein segment. Topologically, residues 28–153 (LRRNLTYLYM…LDTPIAQTTP (126 aa)) are periplasmic. Positions 121 and 125 each coordinate heme. Over residues 130–141 (LTNKMQPTPTQH) the composition is skewed to polar residues. A disordered region spans residues 130–153 (LTNKMQPTPTQHTHLDTPIAQTTP).

Belongs to the CcmE/CycJ family.

Its subcellular location is the cell inner membrane. Functionally, heme chaperone required for the biogenesis of c-type cytochromes. Transiently binds heme delivered by CcmC and transfers the heme to apo-cytochromes in a process facilitated by CcmF and CcmH. The protein is Cytochrome c-type biogenesis protein CcmE of Xylella fastidiosa (strain 9a5c).